The primary structure comprises 297 residues: Phosphatidylinositol N-acetylglucosaminyltransferase subunit C (297 aa).

4 helical membrane-spanning segments follow: residues 67-87 (VFVV…WLFG), 88-108 (TGLA…GGDG), 153-173 (AVFM…AAIV), and 239-259 (AFGG…LLLF).

The protein belongs to the PIGC family. Component of the glycosylphosphatidylinositol-N-acetylglucosaminyltransferase (GPI-GnT) complex composed at least by PIGA, PIGC, PIGH, PIGP, PIGQ, PIGY and DPM2. Interacts with PIGQ. Interacts with the heterodimer PIGA:PIGH.

Its subcellular location is the endoplasmic reticulum membrane. It functions in the pathway glycolipid biosynthesis; glycosylphosphatidylinositol-anchor biosynthesis. Part of the glycosylphosphatidylinositol-N-acetylglucosaminyltransferase (GPI-GnT) complex that catalyzes the transfer of N-acetylglucosamine from UDP-N-acetylglucosamine to phosphatidylinositol and participates in the first step of GPI biosynthesis. The polypeptide is Phosphatidylinositol N-acetylglucosaminyltransferase subunit C (Mus musculus (Mouse)).